A 196-amino-acid chain; its full sequence is ATP-dependent Clp protease proteolytic subunit (196 aa).

S101 functions as the Nucleophile in the catalytic mechanism. The active site involves H126.

It belongs to the peptidase S14 family. As to quaternary structure, component of the chloroplastic Clp protease core complex.

It is found in the plastid. It localises to the chloroplast stroma. The enzyme catalyses Hydrolysis of proteins to small peptides in the presence of ATP and magnesium. alpha-casein is the usual test substrate. In the absence of ATP, only oligopeptides shorter than five residues are hydrolyzed (such as succinyl-Leu-Tyr-|-NHMec, and Leu-Tyr-Leu-|-Tyr-Trp, in which cleavage of the -Tyr-|-Leu- and -Tyr-|-Trp bonds also occurs).. Its function is as follows. Cleaves peptides in various proteins in a process that requires ATP hydrolysis. Has a chymotrypsin-like activity. Plays a major role in the degradation of misfolded proteins. The protein is ATP-dependent Clp protease proteolytic subunit of Helianthus annuus (Common sunflower).